The following is a 428-amino-acid chain: Isocitrate lyase 1 (428 aa).

Position 91-93 (91-93 (SGW)) interacts with substrate. D153 lines the Mg(2+) pocket. The active-site Proton acceptor is the C191. Substrate contacts are provided by residues 192-193 (GH), R228, 313-317 (NCSPS), and T347.

Belongs to the isocitrate lyase/PEP mutase superfamily. Isocitrate lyase family. Homotetramer. Mg(2+) is required as a cofactor.

It carries out the reaction D-threo-isocitrate = glyoxylate + succinate. The catalysed reaction is (2S,3R)-3-hydroxybutane-1,2,3-tricarboxylate = pyruvate + succinate. Its pathway is carbohydrate metabolism; glyoxylate cycle; (S)-malate from isocitrate: step 1/2. Involved in the persistence and virulence of M.tuberculosis. Catalyzes the reversible formation of succinate and glyoxylate from isocitrate, a key step of the glyoxylate cycle, which operates as an anaplerotic route for replenishing the tricarboxylic acid cycle during growth on fatty acid substrates. It also catalyzes the formation of pyruvate and succinate from 2-methylisocitrate, a key step in the methylcitrate cycle (propionate degradation route). The polypeptide is Isocitrate lyase 1 (icl1) (Mycobacterium tuberculosis (strain ATCC 35801 / TMC 107 / Erdman)).